Reading from the N-terminus, the 354-residue chain is Chaperone protein dnaJ 49 (354 aa).

A J domain is found at 99–163 (DYYAILGLEK…NSRRQFDQVG (65 aa)). Residues 237-257 (CLTIIQILPFFLLLLLAYLPF) traverse the membrane as a helical segment.

Belongs to the DnaJ family. C/III subfamily.

It localises to the membrane. Plays a continuous role in plant development probably in the structural organization of compartments. This Arabidopsis thaliana (Mouse-ear cress) protein is Chaperone protein dnaJ 49 (ATJ49).